A 671-amino-acid chain; its full sequence is Spartin (671 aa).

The residue at position 1 (Met-1) is an N-acetylmethionine. Positions 16-94 constitute an MIT domain; it reads IKEAYEKAFM…LQNVRTRLEI (79 aa). The segment at 110–175 is disordered; that stretch reads VPKLYPEFPP…CPAEAPPAYS (66 aa). Basic and acidic residues predominate over residues 118-128; the sequence is PPKDACKKSPE. At Ser-126 the chain carries Phosphoserine. Residues 143–158 are compositionally biased toward low complexity; it reads GSASAACAGPSGAPSA. The segment covering 159-174 has biased composition (pro residues); that stretch reads LPVPSPSCPAEAPPAY. The ubiquitin-binding region (UBR) domain stretch occupies residues 190–385; that stretch reads DSGEFSSVGE…SIDQGSKDAR (196 aa). Residues 193-200 carry the LC3-interacting region (LIR); mediates interaction with MAP1LC3A AND MAP1LC3C motif; sequence EFSSVGED. The segment at 346–421 is disordered; that stretch reads FQIPGRSSHP…SSEEKSKELP (76 aa). Lys-360 is covalently cross-linked (Glycyl lysine isopeptide (Lys-Gly) (interchain with G-Cter in ubiquitin)). The span at 369–379 shows a compositional bias: low complexity; that stretch reads QSSSSGSSIDQ. The span at 384 to 393 shows a compositional bias: basic residues; sequence ARHKGKRGKK. The 185-residue stretch at 431 to 615 folds into the Senescence domain; that stretch reads ILSGASWVSW…YNIDNIGIKA (185 aa). The required for localization to lipid droplets stretch occupies residues 435 to 507; sequence ASWVSWGLVK…LVDGVCTVAN (73 aa). Phosphoserine is present on Ser-474. The segment at 635–671 is disordered; the sequence is VERPQRESQGGATSTEGRRDIGKQVEEEKPGAGKKDK. Residues 650–671 show a composition bias toward basic and acidic residues; that stretch reads EGRRDIGKQVEEEKPGAGKKDK.

In terms of assembly, interacts with ITCH and WWP1. Interacts (via MIT domain) with IST1; leading to the recruitment of SPART to midbodies. Interacts with MAP1LC3A and MAP1LC3C. In terms of processing, ubiquitinated; ubiquitination does not require ITCH and WWP1. As to expression, brain (at protein level).

Its subcellular location is the cytoplasm. It localises to the midbody. The protein localises to the lipid droplet. Functionally, lipophagy receptor that plays an important role in lipid droplet (LD) turnover in motor neurons. Localizes to LDs and interacts with components of the autophagy machinery, such as MAP1LC3A/C proteins to deliver LDs to autophagosomes for degradation via lipophagy. Lipid transfer protein required for lipid droplet degradation, including by lipophagy. Can bind and transfer all lipid species found in lipid droplets, from phospholipids to triglycerides and sterol esters but the direction of lipid transfer by spartin and its cargos are unknown. May be implicated in endosomal trafficking, or microtubule dynamics, or both. Participates in cytokinesis. In Mus musculus (Mouse), this protein is Spartin.